A 291-amino-acid polypeptide reads, in one-letter code: Syntaxin-1A homolog (291 aa).

The interval 1–24 is disordered; sequence MTKDRLSALKAAQSEDEQDDDMHM. Over 1-266 the chain is Cytoplasmic; the sequence is MTKDRLSALK…QYQSKARRKK (266 aa). Residues 69–95 are a coiled coil; that stretch reads NDQKTKEELDELMAVIKRAANKVRGKL. Residues 193 to 255 enclose the t-SNARE coiled-coil homology domain; sequence LADIEARHND…DRAVADTKKA (63 aa). The helical; Anchor for type IV membrane protein transmembrane segment at 267–287 threads the bilayer; it reads ICILVTGVILITGLIIFILFY. The Extracellular segment spans residues 288–291; the sequence is AKVL.

It belongs to the syntaxin family. In terms of assembly, interacts (via N-terminus, in open or in closed conformation) with unc-18; the interaction is direct. Interaction in open conformation with unc-18 promotes synaptic vesicle docking and tethering. Interaction via N-terminus with unc-18 mediates the secretion of the neurotransmitter acetylcholine from cholinergic motor neurons. Interaction with unc-18 is reduced in the presence of unc-13. Expressed throughout the head ganglion, nerve ring, ventral cord, dorsal cord, intestine, vulva and spermatheca.

Its subcellular location is the cell membrane. The protein resides in the cell projection. It is found in the axon. The protein localises to the dendrite. It localises to the perikaryon. In terms of biological role, plays a critical role in several secretory processes, including cuticle secretion and neurotransmitter release, and probably assists in neuronal membrane maturation or the final stages of neuronal differentiation. Plays a role in synaptic vesicle docking and tethering through its association with unc-18. Through binding to unc-18 mediates the release of the neurotransmitter acetylcholine from cholinergic motor neurons, and thereby promotes locomotory behaviors. Essential for embryonic viability and development. Has a role in dauer formation and adult life span. Required for locomotion. Probably by regulating neuronal transmission downstream of lin-3 and receptor lin-23 and phospholipase plc-3 and upstream of innexin unc-7 and egl-4/PKG in ALA neurons, involved in the decrease in pharyngeal pumping during the quiescent state that precedes each larval molt. In Caenorhabditis elegans, this protein is Syntaxin-1A homolog.